Consider the following 175-residue polypeptide: DASH complex subunit DAM1 (175 aa).

The interval Met-1 to Ala-39 is disordered. Positions Arg-20–Ala-39 are enriched in low complexity.

Belongs to the DASH complex DAM1 family. As to quaternary structure, component of the DASH complex consisting of ASK1, DAD1, DAD2, DAD3, DAD4, DAM1, DUO1, HSK3, SPC19 and SPC34, with a stoichiometry of one copy of each subunit per complex. Multiple DASH complexes oligomerize to form a ring that encircles spindle microtubules and organizes the rod-like NDC80 complexes of the outer kinetochore. DASH complex oligomerization strengthens microtubule attachments. On cytoplasmic microtubules, DASH complexes appear to form patches instead of rings.

It localises to the chromosome. It is found in the centromere. The protein resides in the kinetochore. Its subcellular location is the cytoplasm. The protein localises to the cytoskeleton. It localises to the spindle. It is found in the nucleus. Functionally, component of the DASH complex that connects microtubules with kinetochores and couples microtubule depolymerisation to chromosome movement; it is involved in retrieving kinetochores to the spindle poles before their re-orientation on the spindle in early mitosis and allows microtubule depolymerization to pull chromosomes apart and resist detachment during anaphase. Kinetochores, consisting of a centromere-associated inner segment and a microtubule-contacting outer segment, play a crucial role in chromosome segregation by mediating the physical connection between centromeric DNA and microtubules. Kinetochores also serve as an input point for the spindle assembly checkpoint, which delays anaphase until all chromosomes have bioriented on the mitotic spindle. The polypeptide is DASH complex subunit DAM1 (Chaetomium thermophilum (strain DSM 1495 / CBS 144.50 / IMI 039719) (Thermochaetoides thermophila)).